An 843-amino-acid polypeptide reads, in one-letter code: Aconitase AMT8-2 (843 aa).

258–260 (DSH) contributes to the substrate binding site. [4Fe-4S] cluster-binding residues include cysteine 450, cysteine 513, and cysteine 516. Substrate is bound by residues arginine 536, arginine 541, and 712–713 (SR).

This sequence belongs to the aconitase/IPM isomerase family.

It participates in mycotoxin biosynthesis. Functionally, aconitase; part of the gene clusters that mediate the biosynthesis of AM-toxins, host-selective toxins (HSTs) causing Alternaria blotch on apple, a worldwide distributed disease. AM-toxins are cyclic depsipeptides containing the 3 residues 2-hydroxy-isovaleric acid (2-HIV), dehydroalanine, L-alanine which are common for all 3 AM-toxins I to III. The fourth precursor is L-alpha-amino-methoxyphenyl-valeric acid (L-Amv) for AM-toxin I, L-alpha-amino-phenyl-valeric acid (L-Apv) for AM-toxin II, and L-alpha-amino-hydroxyphenyl-valeric acid (L-Ahv) for AM-toxin III. AM-toxins have two target sites for affecting susceptible apple cells; they cause invagination of the plasma membrane and electrolyte loss and chloroplast disorganization. The non-ribosomal peptide synthetase AMT1 contains 4 catalytic modules and is responsible for activation of each residue in AM-toxin. The aldo-keto reductase AMT2 catalyzes the conversion of 2-keto-isovaleric acid (2-KIV) to 2-hydroxy-isovaleric acid (2-HIV), one of the precursor residues incorporated by AMT1 during AM-toxin biosynthesis, by reduction of its ketone to an alcohol. The cytochrome P450 monooxygenase AMT3 and the thioesterase AMT4 are also important for AM-toxin production, but their exact function within the AM-toxin biosynthesis are not known yet. Up to 21 proteins (including AMT1 to AMT4) are predicted to be involved in AM-toxin biosynthesis since their expression ishighly up-regulated in AM-toxin-producing cultures. The sequence is that of Aconitase AMT8-2 from Alternaria alternata (Alternaria rot fungus).